We begin with the raw amino-acid sequence, 503 residues long: Probable cytosol aminopeptidase (503 aa).

Mn(2+)-binding residues include Lys270 and Asp275. Lys282 is an active-site residue. Residues Asp293, Asp352, and Glu354 each coordinate Mn(2+). Arg356 is a catalytic residue.

The protein belongs to the peptidase M17 family. It depends on Mn(2+) as a cofactor.

It is found in the cytoplasm. The catalysed reaction is Release of an N-terminal amino acid, Xaa-|-Yaa-, in which Xaa is preferably Leu, but may be other amino acids including Pro although not Arg or Lys, and Yaa may be Pro. Amino acid amides and methyl esters are also readily hydrolyzed, but rates on arylamides are exceedingly low.. It catalyses the reaction Release of an N-terminal amino acid, preferentially leucine, but not glutamic or aspartic acids.. Functionally, presumably involved in the processing and regular turnover of intracellular proteins. Catalyzes the removal of unsubstituted N-terminal amino acids from various peptides. This Shigella dysenteriae serotype 1 (strain Sd197) protein is Probable cytosol aminopeptidase.